A 412-amino-acid polypeptide reads, in one-letter code: Peptidase T (412 aa).

His78 provides a ligand contact to Zn(2+). Asp80 is an active-site residue. Residue Asp140 coordinates Zn(2+). The active-site Proton acceptor is Glu174. 3 residues coordinate Zn(2+): Glu175, Asp197, and His379.

The protein belongs to the peptidase M20B family. The cofactor is Zn(2+).

Its subcellular location is the cytoplasm. It carries out the reaction Release of the N-terminal residue from a tripeptide.. Cleaves the N-terminal amino acid of tripeptides. In Staphylococcus epidermidis (strain ATCC 12228 / FDA PCI 1200), this protein is Peptidase T.